A 186-amino-acid chain; its full sequence is Elongation factor P (186 aa).

It belongs to the elongation factor P family.

The protein resides in the cytoplasm. Its pathway is protein biosynthesis; polypeptide chain elongation. In terms of biological role, involved in peptide bond synthesis. Stimulates efficient translation and peptide-bond synthesis on native or reconstituted 70S ribosomes in vitro. Probably functions indirectly by altering the affinity of the ribosome for aminoacyl-tRNA, thus increasing their reactivity as acceptors for peptidyl transferase. The sequence is that of Elongation factor P from Mycoplasmopsis synoviae (strain 53) (Mycoplasma synoviae).